Here is a 315-residue protein sequence, read N- to C-terminus: Olfactory receptor 2V2 (315 aa).

Topologically, residues Met1 to Leu26 are extracellular. Asn6 is a glycosylation site (N-linked (GlcNAc...) asparagine). A helical transmembrane segment spans residues Val27 to Ile50. The Cytoplasmic segment spans residues Tyr51–Thr58. Residues Pro59–Pro80 form a helical membrane-spanning segment. Residues Lys81–Gln101 lie on the Extracellular side of the membrane. A disulfide bridge links Cys98 with Cys190. Residues Ile102–Tyr121 traverse the membrane as a helical segment. Topologically, residues Asp122 to Arg140 are cytoplasmic. Residues Val141–Ile159 form a helical membrane-spanning segment. Residues Gln160–Phe196 lie on the Extracellular side of the membrane. Residues Glu197–Ala220 traverse the membrane as a helical segment. Topologically, residues His221 to Lys237 are cytoplasmic. The helical transmembrane segment at Ala238–Tyr260 threads the bilayer. The Extracellular segment spans residues Leu261–Lys273. The helical transmembrane segment at Val274–Leu293 threads the bilayer. Residues Arg294–His315 lie on the Cytoplasmic side of the membrane.

Belongs to the G-protein coupled receptor 1 family.

The protein resides in the cell membrane. Odorant receptor. In Homo sapiens (Human), this protein is Olfactory receptor 2V2 (OR2V2).